The chain runs to 97 residues: HssA/B-like protein 27 (97 aa).

Belongs to the hssA/B family.

This chain is HssA/B-like protein 27 (hssl27), found in Dictyostelium discoideum (Social amoeba).